The chain runs to 669 residues: Probable L-type lectin-domain containing receptor kinase I.2 (669 aa).

An N-terminal signal peptide occupies residues 1–24; it reads MAQRFYLLLLLLIFLVNLICFSSQ. Over 25 to 295 the chain is Extracellular; it reads QDLSFVFNGF…FTEQKRKRSP (271 aa). The interval 26 to 266 is legume-lectin like; the sequence is DLSFVFNGFN…NQYILGWSFS (241 aa). N-linked (GlcNAc...) asparagine glycans are attached at residues Asn132, Asn189, Asn212, and Asn233. Residues 296 to 316 form a helical membrane-spanning segment; the sequence is LLIVLLVILTLVVIGGLGGYY. The Cytoplasmic segment spans residues 317-669; the sequence is LYRRKKYAEV…SHTILNGDGR (353 aa). The Protein kinase domain maps to 351–609; sequence FNKDGRLGKG…MQYINRDQAL (259 aa). Residues 357-365 and Lys379 contribute to the ATP site; that span reads LGKGGFGEV. The active-site Proton acceptor is Asp475.

The protein in the C-terminal section; belongs to the protein kinase superfamily. Ser/Thr protein kinase family. It in the N-terminal section; belongs to the leguminous lectin family.

The protein resides in the cell membrane. It carries out the reaction L-seryl-[protein] + ATP = O-phospho-L-seryl-[protein] + ADP + H(+). The enzyme catalyses L-threonyl-[protein] + ATP = O-phospho-L-threonyl-[protein] + ADP + H(+). Functionally, involved in resistance response to the pathogenic fungus Alternaria brassicicola. In Arabidopsis thaliana (Mouse-ear cress), this protein is Probable L-type lectin-domain containing receptor kinase I.2.